The primary structure comprises 445 residues: Arginine biosynthesis bifunctional protein ArgJ, mitochondrial (445 aa).

Substrate is bound by residues T189, K215, T226, E312, N440, and S445. Catalysis depends on T226, which acts as the Nucleophile.

Belongs to the ArgJ family. Heterodimer of an alpha and a beta chain. The alpha and beta chains are autoproteolytically processed from a single precursor protein within the mitochondrion.

Its subcellular location is the mitochondrion matrix. It carries out the reaction N(2)-acetyl-L-ornithine + L-glutamate = N-acetyl-L-glutamate + L-ornithine. The enzyme catalyses L-glutamate + acetyl-CoA = N-acetyl-L-glutamate + CoA + H(+). The protein operates within amino-acid biosynthesis; L-arginine biosynthesis; L-ornithine and N-acetyl-L-glutamate from L-glutamate and N(2)-acetyl-L-ornithine (cyclic): step 1/1. Its pathway is amino-acid biosynthesis; L-arginine biosynthesis; N(2)-acetyl-L-ornithine from L-glutamate: step 1/4. Functionally, catalyzes two activities which are involved in the cyclic version of arginine biosynthesis: the synthesis of acetylglutamate from glutamate and acetyl-CoA, and of ornithine by transacetylation between acetylornithine and glutamate. The polypeptide is Arginine biosynthesis bifunctional protein ArgJ, mitochondrial (Schizosaccharomyces pombe (strain 972 / ATCC 24843) (Fission yeast)).